We begin with the raw amino-acid sequence, 131 residues long: MAASLPHPKIVKKHTKKFKRHHSDRYHRVAENWRKQKGIDSVVRRRFRGQISEPTIGYGSNKKTRFMTPSGHKTYLVSNIKDLEVLMMHTKTYAAEIASNVSSKNRVSILARAKALGIKVTNPKGRLALEA.

Belongs to the eukaryotic ribosomal protein eL32 family.

The chain is Large ribosomal subunit protein eL32 (RPL32) from Eremothecium gossypii (strain ATCC 10895 / CBS 109.51 / FGSC 9923 / NRRL Y-1056) (Yeast).